The sequence spans 125 residues: Small ribosomal subunit protein uS12 (125 aa).

D89 is modified (3-methylthioaspartic acid). The disordered stretch occupies residues 100-125 (GSLDTQGVKDRKQSRSKYGAKRPKAA). A compositionally biased stretch (basic residues) spans 113–125 (SRSKYGAKRPKAA).

Belongs to the universal ribosomal protein uS12 family. As to quaternary structure, part of the 30S ribosomal subunit. Contacts proteins S8 and S17. May interact with IF1 in the 30S initiation complex.

Its function is as follows. With S4 and S5 plays an important role in translational accuracy. Interacts with and stabilizes bases of the 16S rRNA that are involved in tRNA selection in the A site and with the mRNA backbone. Located at the interface of the 30S and 50S subunits, it traverses the body of the 30S subunit contacting proteins on the other side and probably holding the rRNA structure together. The combined cluster of proteins S8, S12 and S17 appears to hold together the shoulder and platform of the 30S subunit. The sequence is that of Small ribosomal subunit protein uS12 from Dechloromonas aromatica (strain RCB).